Consider the following 311-residue polypeptide: Ribosomal RNA small subunit methyltransferase H (311 aa).

Residues 33-35 (AGH), Asp53, Phe80, Asp101, and Gln108 contribute to the S-adenosyl-L-methionine site.

The protein belongs to the methyltransferase superfamily. RsmH family.

It is found in the cytoplasm. It catalyses the reaction cytidine(1402) in 16S rRNA + S-adenosyl-L-methionine = N(4)-methylcytidine(1402) in 16S rRNA + S-adenosyl-L-homocysteine + H(+). Specifically methylates the N4 position of cytidine in position 1402 (C1402) of 16S rRNA. This is Ribosomal RNA small subunit methyltransferase H from Geobacter sulfurreducens (strain ATCC 51573 / DSM 12127 / PCA).